The sequence spans 211 residues: Large ribosomal subunit protein uL3 (211 aa).

The disordered stretch occupies residues 135–155 (THGNSLSHRAPGSIGQNQSPG). An N5-methylglutamine modification is found at glutamine 152.

The protein belongs to the universal ribosomal protein uL3 family. In terms of assembly, part of the 50S ribosomal subunit. Forms a cluster with proteins L14 and L19. In terms of processing, methylated by PrmB.

Its function is as follows. One of the primary rRNA binding proteins, it binds directly near the 3'-end of the 23S rRNA, where it nucleates assembly of the 50S subunit. In Pseudoalteromonas translucida (strain TAC 125), this protein is Large ribosomal subunit protein uL3.